A 105-amino-acid polypeptide reads, in one-letter code: Diuretic hormone class 2 (105 aa).

The signal sequence occupies residues 1–23 (MTVLCTLMAFVMVVAISSLTVDA). Positions 24–63 (IPHSHESYWDQQDDIDRDEFLELLSRLSRTVMNRPEMENS) are excised as a propeptide. Proline 96 is modified (proline amide). A propeptide spanning residues 101-105 (RSEQA) is cleaved from the precursor.

Expressed in central brain, antennal lobes, retrocerebral complex and gnathal, thoracic and abdominal ganglia but not in optical lobes (at protein level).

The protein localises to the secreted. Regulation of fluid secretion. Stimulates Malpighian tubules fluid secretion. The protein is Diuretic hormone class 2 of Camponotus floridanus (Florida carpenter ant).